The primary structure comprises 104 residues: Complex III assembly factor LYRM7 (104 aa).

S60 carries the phosphoserine modification.

This sequence belongs to the complex I LYR family. Interacts with UQCRFS1.

It is found in the mitochondrion matrix. Its function is as follows. Assembly factor required for Rieske Fe-S protein UQCRFS1 incorporation into the cytochrome b-c1 (CIII) complex. Functions as a chaperone, binding to this subunit within the mitochondrial matrix and stabilizing it prior to its translocation and insertion into the late CIII dimeric intermediate within the mitochondrial inner membrane. This Pongo abelii (Sumatran orangutan) protein is Complex III assembly factor LYRM7 (LYRM7).